Consider the following 512-residue polypeptide: Immunoglobulin delta heavy chain (512 aa).

Ig-like domains lie at 1 to 97 (RLQL…MYYC) and 135 to 227 (PDVF…KEIF). Residues 1 to 129 (RLQLQESGPG…GQGTTVHVSS (129 aa)) form a variable (V) domain, involved in antigen recognition region. 2 cysteine pairs are disulfide-bonded: Cys22-Cys97 and Cys157-Cys213. A constant (C) domain region spans residues 130–512 (APTKAPDVFP…VSYVTDHGPM (383 aa)). The interval 225–296 (EIFRWPESPK…TPECPSHTQP (72 aa)) is disordered. The segment covering 235 to 247 (AQASSVPTAQPQA) has biased composition (polar residues). O-linked (GalNAc...) serine glycosylation occurs at Ser238. Thr255, Thr256, Thr260, and Thr261 each carry an O-linked (GalNAc...) threonine glycan. A compositionally biased stretch (basic and acidic residues) spans 267–287 (GGEEKKKEKEKEEQEERETKT). Ig-like domains follow at residues 304 to 392 (PAVQ…RLMA) and 396 to 502 (PAAQ…RSLE). 2 cysteine pairs are disulfide-bonded: Cys319-Cys378 and Cys423-Cys484. Asn354, Asn445, and Asn496 each carry an N-linked (GlcNAc...) asparagine glycan.

In terms of assembly, immunoglobulins are composed of two identical heavy chains and two identical light chains; disulfide-linked. An IgD molecule contains thus a delta heavy chain combined with either a kappa or a lambda light chains. Kappa light chains are found predominantly on the membrane IgD (mIgD) form and lambda on the secreted IgD (sIgD) form, this fact is poorly understood. Membrane-bound IgD molecules are non-covalently associated with a heterodimer of CD79A and CD79B.

It localises to the secreted. It is found in the cell membrane. Its function is as follows. Immunoglobulins, also known as antibodies, are membrane-bound or secreted glycoproteins produced by B lymphocytes. In the recognition phase of humoral immunity, the membrane-bound immunoglobulins serve as receptors which, upon binding of a specific antigen, trigger the clonal expansion and differentiation of B lymphocytes into immunoglobulins-secreting plasma cells. Secreted immunoglobulins mediate the effector phase of humoral immunity, which results in the elimination of bound antigens. The antigen binding site is formed by the variable domain of one heavy chain, together with that of its associated light chain. Thus, each immunoglobulin has two antigen binding sites with remarkable affinity for a particular antigen. The variable domains are assembled by a process called V-(D)-J rearrangement and can then be subjected to somatic hypermutations which, after exposure to antigen and selection, allow affinity maturation for a particular antigen. IgD is the major antigen receptor isotype on the surface of most peripheral B cells, where it is coexpressed with IgM. The membrane-bound IgD (mIgD) induces the phosphorylation of CD79A and CD79B by the Src family of protein tyrosine kinases. Soluble IgD (sIgD) concentration in serum is below those of IgG, IgA, and IgM but much higher than that of IgE. IgM and IgD molecules present on B cells have identical V regions and antigen-binding sites. After the antigen binds to the B cell receptor, the secreted form sIgD is shut off. IgD is a potent inducer of TNF, IL1B, and IL1RN. IgD also induces release of IL6, IL10, and LIF from peripheral blood mononuclear cells. Monocytes seem to be the main producers of cytokines in vitro in the presence of IgD. The polypeptide is Immunoglobulin delta heavy chain (Homo sapiens (Human)).